A 462-amino-acid chain; its full sequence is Elongation factor 1-alpha, somatic form (462 aa).

G2 bears the N,N,N-trimethylglycine mark. A tr-type G domain is found at K5–T242. The interval G14–S21 is G1. G14–S21 is a GTP binding site. Residues G70–D74 form a G2 region. Residues D91–G94 form a G3 region. GTP-binding positions include D91 to H95 and N153 to D156. Residues N153–D156 are G4. The interval S194 to W196 is G5. E301 and E374 each carry 5-glutamyl glycerylphosphorylethanolamine.

It belongs to the TRAFAC class translation factor GTPase superfamily. Classic translation factor GTPase family. EF-Tu/EF-1A subfamily.

Its subcellular location is the cytoplasm. Its function is as follows. This protein promotes the GTP-dependent binding of aminoacyl-tRNA to the A-site of ribosomes during protein biosynthesis. This Xenopus laevis (African clawed frog) protein is Elongation factor 1-alpha, somatic form (eef1as).